A 159-amino-acid chain; its full sequence is UPF0262 protein CCNA_02430 (159 aa).

The protein belongs to the UPF0262 family.

The sequence is that of UPF0262 protein CCNA_02430 from Caulobacter vibrioides (strain NA1000 / CB15N) (Caulobacter crescentus).